Reading from the N-terminus, the 501-residue chain is CaM kinase-like vesicle-associated protein (501 aa).

In terms of domain architecture, Protein kinase spans 24 to 286 (YDLGQVIKTE…AEEAISHEWI (263 aa)). Positions 327-501 (RAPEQSSTAA…AQESQREEAS (175 aa)) are disordered. The segment covering 331–365 (QSSTAAAQSASATDTATPGAAGGATAAAASGATSA) has biased composition (low complexity). Polar residues predominate over residues 387 to 428 (TPATDGSATPATDGSVTPATDGSITPATDGSVTPATDRSATP). Threonine 435 bears the Phosphothreonine mark. Over residues 438–451 (TEESTVPTTQSSAM) the composition is skewed to polar residues. At threonine 459 the chain carries Phosphothreonine.

It belongs to the protein kinase superfamily. CAMK Ser/Thr protein kinase family. Interacts with calmodulin, in the presence of calcium. Ca(2+) is required as a cofactor.

The protein localises to the cell membrane. It is found in the cytoplasmic vesicle membrane. Its function is as follows. Does not appear to have detectable kinase activity. The chain is CaM kinase-like vesicle-associated protein (CAMKV) from Homo sapiens (Human).